A 257-amino-acid polypeptide reads, in one-letter code: NAD-capped RNA hydrolase NudC (257 aa).

Substrate contacts are provided by Lys25 and Arg69. Zn(2+) contacts are provided by Cys98 and Cys101. Residue Glu111 participates in substrate binding. Cys116 and Cys119 together coordinate Zn(2+). Tyr124 is a substrate binding site. A Nudix hydrolase domain is found at 125–248 (PQIAPCIIVA…TVARRLIEDT (124 aa)). Ala158, Glu174, and Glu178 together coordinate a divalent metal cation. Positions 159–180 (GFVEVGETLEQAVAREVMEESG) match the Nudix box motif. 192 to 199 (QPWPFPQS) provides a ligand contact to substrate. Glu219 serves as a coordination point for a divalent metal cation. Ala241 contacts substrate.

It belongs to the Nudix hydrolase family. NudC subfamily. As to quaternary structure, homodimer. It depends on Mg(2+) as a cofactor. Requires Mn(2+) as cofactor. Zn(2+) is required as a cofactor.

It catalyses the reaction a 5'-end NAD(+)-phospho-ribonucleoside in mRNA + H2O = a 5'-end phospho-adenosine-phospho-ribonucleoside in mRNA + beta-nicotinamide D-ribonucleotide + 2 H(+). The enzyme catalyses NAD(+) + H2O = beta-nicotinamide D-ribonucleotide + AMP + 2 H(+). The catalysed reaction is NADH + H2O = reduced beta-nicotinamide D-ribonucleotide + AMP + 2 H(+). Its function is as follows. mRNA decapping enzyme that specifically removes the nicotinamide adenine dinucleotide (NAD) cap from a subset of mRNAs by hydrolyzing the diphosphate linkage to produce nicotinamide mononucleotide (NMN) and 5' monophosphate mRNA. The NAD-cap is present at the 5'-end of some mRNAs and stabilizes RNA against 5'-processing. Has preference for mRNAs with a 5'-end purine. Catalyzes the hydrolysis of a broad range of dinucleotide pyrophosphates. This is NAD-capped RNA hydrolase NudC from Escherichia coli (strain 55989 / EAEC).